The sequence spans 143 residues: AP-2 complex subunit sigma (143 aa).

Belongs to the adaptor complexes small subunit family. Adaptor protein complex 2 (AP-2) is a heterotetramer composed of two large adaptins (alpha-type subunit apl3 and beta-type subunit apl1), a medium chain (mu-type subunit apm4) and a small adaptin (sigma-type subunit aps2).

Its subcellular location is the cell membrane. The protein localises to the membrane. It is found in the coated pit. Component of the adaptor complexes which link clathrin to receptors in coated vesicles. Clathrin-associated protein complexes are believed to interact with the cytoplasmic tails of membrane proteins, leading to their selection and concentration. This is AP-2 complex subunit sigma (aps2) from Schizosaccharomyces pombe (strain 972 / ATCC 24843) (Fission yeast).